The chain runs to 492 residues: MKAFHLLLFHGSFIFPECILIFGLILLLMIDSTSDQKDTPWLYFISSTSLVMSITALLFRWREEPMISFSGNFQTNNFNEVFQFLILLCSTLCIPLSVEYIECTEMAITEFLLFVLTATLGGMFLCGANDLITIFVAPECFSLCSYLLSGYTKRDVRSNEATTKYLLMGGASSSILVHGFSWLYGSSGGEIELQEILNGLINTQMYNSPGISIALISITVGIGFKLSPAPSHQWTPDVYEGSPTPVVAFLSVTSKVAASASATRIFDIPFYFSSNEWHLLLEILAILSMILGNLIAITQTSMKRMLAYSSIGQIGYVIIGIIVGDSNDGYASMITYMLFYISMNLGTFARIVSFGPRTGTDNIRDYAGLYTKDPFLALSSALCLLSLGGIPPLAGFFGKLHLFWCGWQAGLYFLVSIGLLTSVVSIYYYLKIIKLLMTGRNKEITPHVRNYRRSPLRSNNSIELSMIVCVIASTIPGISMNPIIAIAQDTLF.

13 consecutive transmembrane segments (helical) span residues 6–26 (LLLFHGSFIFPECILIFGLIL), 39–59 (TPWLYFISSTSLVMSITALLF), 81–101 (VFQFLILLCSTLCIPLSVEYI), 106–126 (MAITEFLLFVLTATLGGMFLC), 131–151 (LITIFVAPECFSLCSYLLSGY), 165–185 (YLLMGGASSSILVHGFSWLYG), 209–229 (PGISIALISITVGIGFKLSPA), 277–297 (WHLLLEILAILSMILGNLIAI), 305–325 (MLAYSSIGQIGYVIIGIIVGD), 329–349 (GYASMITYMLFYISMNLGTFA), 377–397 (ALSSALCLLSLGGIPPLAGFF), 400–420 (LHLFWCGWQAGLYFLVSIGLL), and 466–486 (MIVCVIASTIPGISMNPIIAI).

The protein belongs to the complex I subunit 2 family. NDH is composed of at least 16 different subunits, 5 of which are encoded in the nucleus.

The protein resides in the plastid. It localises to the chloroplast thylakoid membrane. It catalyses the reaction a plastoquinone + NADH + (n+1) H(+)(in) = a plastoquinol + NAD(+) + n H(+)(out). The enzyme catalyses a plastoquinone + NADPH + (n+1) H(+)(in) = a plastoquinol + NADP(+) + n H(+)(out). In terms of biological role, NDH shuttles electrons from NAD(P)H:plastoquinone, via FMN and iron-sulfur (Fe-S) centers, to quinones in the photosynthetic chain and possibly in a chloroplast respiratory chain. The immediate electron acceptor for the enzyme in this species is believed to be plastoquinone. Couples the redox reaction to proton translocation, and thus conserves the redox energy in a proton gradient. In Illicium oligandrum (Star anise), this protein is NAD(P)H-quinone oxidoreductase subunit 2 A, chloroplastic.